Reading from the N-terminus, the 1363-residue chain is DNA-directed RNA polymerase subunit beta (1363 aa).

The protein belongs to the RNA polymerase beta chain family. In terms of assembly, the RNAP catalytic core consists of 2 alpha, 1 beta, 1 beta' and 1 omega subunit. When a sigma factor is associated with the core the holoenzyme is formed, which can initiate transcription.

The enzyme catalyses RNA(n) + a ribonucleoside 5'-triphosphate = RNA(n+1) + diphosphate. DNA-dependent RNA polymerase catalyzes the transcription of DNA into RNA using the four ribonucleoside triphosphates as substrates. The chain is DNA-directed RNA polymerase subunit beta from Neorickettsia risticii (Ehrlichia risticii).